A 329-amino-acid chain; its full sequence is Ribosomal RNA small subunit methyltransferase H (329 aa).

S-adenosyl-L-methionine is bound by residues 34–36 (GGH), aspartate 59, phenylalanine 86, aspartate 112, and glutamine 119.

The protein belongs to the methyltransferase superfamily. RsmH family.

It is found in the cytoplasm. It catalyses the reaction cytidine(1402) in 16S rRNA + S-adenosyl-L-methionine = N(4)-methylcytidine(1402) in 16S rRNA + S-adenosyl-L-homocysteine + H(+). In terms of biological role, specifically methylates the N4 position of cytidine in position 1402 (C1402) of 16S rRNA. The chain is Ribosomal RNA small subunit methyltransferase H from Chlorobium phaeobacteroides (strain DSM 266 / SMG 266 / 2430).